Here is a 100-residue protein sequence, read N- to C-terminus: Urease subunit gamma (100 aa).

The protein belongs to the urease gamma subunit family. As to quaternary structure, heterotrimer of UreA (gamma), UreB (beta) and UreC (alpha) subunits. Three heterotrimers associate to form the active enzyme.

The protein resides in the cytoplasm. The enzyme catalyses urea + 2 H2O + H(+) = hydrogencarbonate + 2 NH4(+). It functions in the pathway nitrogen metabolism; urea degradation; CO(2) and NH(3) from urea (urease route): step 1/1. In Lysinibacillus sphaericus (strain C3-41), this protein is Urease subunit gamma.